Reading from the N-terminus, the 92-residue chain is Small ribosomal subunit protein uS19c (92 aa).

Belongs to the universal ribosomal protein uS19 family.

It is found in the plastid. The protein localises to the chloroplast. Protein S19 forms a complex with S13 that binds strongly to the 16S ribosomal RNA. This Lactuca sativa (Garden lettuce) protein is Small ribosomal subunit protein uS19c.